A 468-amino-acid chain; its full sequence is Squamosa promoter-binding-like protein 5 (468 aa).

Residues 204 to 281 form an SBP-type zinc finger; that stretch reads PPRCQAEGCK…TEHNRRRRKP (78 aa). Zn(2+) is bound by residues Cys207, Cys212, Cys229, His232, Cys248, Cys251, His255, and Cys267. Positions 264–280 match the Bipartite nuclear localization signal motif; it reads KRSCRKRLTEHNRRRRK. 3 disordered regions span residues 270–305, 354–374, and 405–458; these read RLTE…DASI, TLSL…DGGL, and HHHL…SNNN. A compositionally biased stretch (acidic residues) spans 363-372; it reads QEEDDEDEDG. A compositionally biased stretch (low complexity) spans 438-458; the sequence is NNNNILSCSSASDQQNSSNNN.

In terms of tissue distribution, ubiquitous.

It is found in the nucleus. Trans-acting factor that binds specifically to the consensus nucleotide sequence 5'-TNCGTACAA-3'. The protein is Squamosa promoter-binding-like protein 5 (SPL5) of Oryza sativa subsp. japonica (Rice).